Reading from the N-terminus, the 370-residue chain is Histidinol-phosphate aminotransferase (370 aa).

Residue Lys222 is modified to N6-(pyridoxal phosphate)lysine.

This sequence belongs to the class-II pyridoxal-phosphate-dependent aminotransferase family. Histidinol-phosphate aminotransferase subfamily. As to quaternary structure, homodimer. It depends on pyridoxal 5'-phosphate as a cofactor.

The catalysed reaction is L-histidinol phosphate + 2-oxoglutarate = 3-(imidazol-4-yl)-2-oxopropyl phosphate + L-glutamate. It functions in the pathway amino-acid biosynthesis; L-histidine biosynthesis; L-histidine from 5-phospho-alpha-D-ribose 1-diphosphate: step 7/9. This chain is Histidinol-phosphate aminotransferase, found in Bacillus cytotoxicus (strain DSM 22905 / CIP 110041 / 391-98 / NVH 391-98).